The primary structure comprises 635 residues: Extracellular metalloproteinase 1 (635 aa).

The N-terminal stretch at 1–19 is a signal peptide; sequence MHGLLLAAGLLSLPLHVLA. Positions 20–246 are excised as a propeptide; sequence HPQPSTSTSL…VHNVVDYVAH (227 aa). Asparagine 287 carries an N-linked (GlcNAc...) asparagine glycan. Histidine 430 contributes to the Zn(2+) binding site. Glutamate 431 is a catalytic residue. Zn(2+) is bound at residue histidine 434. Asparagine 475, asparagine 594, and asparagine 623 each carry an N-linked (GlcNAc...) asparagine glycan.

Belongs to the peptidase M36 family. The cofactor is Zn(2+).

It is found in the secreted. Its function is as follows. Secreted metalloproteinase probably acting as a virulence factor. The polypeptide is Extracellular metalloproteinase 1 (MEP1) (Trichophyton tonsurans (Scalp ringworm fungus)).